Consider the following 64-residue polypeptide: DNA gyrase inhibitor YacG (64 aa).

Residues C9, C12, C28, and C32 each contribute to the Zn(2+) site. A disordered region spans residues 42–64 (DEENAIPGAPDMSDSDGWSEEQY). Residues 54–64 (SDSDGWSEEQY) are compositionally biased toward acidic residues.

Belongs to the DNA gyrase inhibitor YacG family. Interacts with GyrB. It depends on Zn(2+) as a cofactor.

Functionally, inhibits all the catalytic activities of DNA gyrase by preventing its interaction with DNA. Acts by binding directly to the C-terminal domain of GyrB, which probably disrupts DNA binding by the gyrase. The sequence is that of DNA gyrase inhibitor YacG from Vibrio vulnificus (strain CMCP6).